The chain runs to 87 residues: Putative regulatory protein GWCH70_1057 (87 aa).

This sequence belongs to the RemA family.

This Geobacillus sp. (strain WCH70) protein is Putative regulatory protein GWCH70_1057.